The following is a 143-amino-acid chain: Peptide methionine sulfoxide reductase MsrB (143 aa).

Residues 16–139 (DAELRRRLTP…NSAALNFEAK (124 aa)) enclose the MsrB domain. Zn(2+) contacts are provided by Cys55, Cys58, Cys104, and Cys107. Residue Cys128 is the Nucleophile of the active site.

This sequence belongs to the MsrB Met sulfoxide reductase family. The cofactor is Zn(2+).

The catalysed reaction is L-methionyl-[protein] + [thioredoxin]-disulfide + H2O = L-methionyl-(R)-S-oxide-[protein] + [thioredoxin]-dithiol. The protein is Peptide methionine sulfoxide reductase MsrB of Burkholderia mallei (strain NCTC 10229).